A 189-amino-acid polypeptide reads, in one-letter code: NADH-ubiquinone oxidoreductase 20.9 kDa subunit (189 aa).

A helical transmembrane segment spans residues 73-88 (AMRLATAVGFFGGFLY).

As to quaternary structure, complex I is composed of about 40 different subunits. The N-terminus is blocked.

It is found in the mitochondrion inner membrane. The catalysed reaction is a ubiquinone + NADH + 5 H(+)(in) = a ubiquinol + NAD(+) + 4 H(+)(out). In terms of biological role, transfer of electrons from NADH to the respiratory chain. The immediate electron acceptor for the enzyme is believed to be ubiquinone. This chain is NADH-ubiquinone oxidoreductase 20.9 kDa subunit (nuo20.9), found in Neurospora crassa (strain ATCC 24698 / 74-OR23-1A / CBS 708.71 / DSM 1257 / FGSC 987).